The following is a 1103-amino-acid chain: Retinal guanylyl cyclase 2 (1103 aa).

The first 46 residues, 1–46, serve as a signal peptide directing secretion; it reads MFLAPWPFSHLMLWFVTLGRQRGQHGLASFKLLWCLWLLVLMSLPL. At 47–465 the chain is on the extracellular side; that stretch reads QVWAPPYKIG…DGRICQGGIN (419 aa). A disulfide bridge connects residues C104 and C132. A helical transmembrane segment spans residues 466-490; that stretch reads PTFALMVCLALLIALLSINGFAYFI. At 491-1103 the chain is on the cytoplasmic side; it reads RHRINKIQLI…FQRRKQKSSW (613 aa). A Protein kinase domain is found at 532–812; that stretch reads FQITSEVQSG…DEIFNQFKTF (281 aa). One can recognise a Guanylate cyclase domain in the interval 884-1014; it reads TLYFSDIVGF…DTVNTASRME (131 aa).

This sequence belongs to the adenylyl cyclase class-4/guanylyl cyclase family. In terms of assembly, homodimer. Interacts with RD3; promotes the exit of GUCY2F from the endoplasmic reticulum and its trafficking to the photoreceptor outer segments. There are 9 conserved cysteine residues in sensory guanylate cyclases, 6 in the extracellular domain, which may be involved in intra- or interchain disulfide bonds. Expressed specifically in retina.

It is found in the membrane. It localises to the photoreceptor outer segment membrane. It carries out the reaction GTP = 3',5'-cyclic GMP + diphosphate. Its activity is regulated as follows. Activated by GUCA1B when free calcium ions concentration is low, and inhibited by GUCA1B when free calcium ions concentration is high. Inhibited by RD3. Its function is as follows. Responsible for the synthesis of cyclic GMP (cGMP) in rods and cones of photoreceptors. Plays an essential role in phototransduction, by mediating cGMP replenishment. May also participate in the trafficking of membrane-asociated proteins to the photoreceptor outer segment membrane. This Bos taurus (Bovine) protein is Retinal guanylyl cyclase 2 (GUCY2F).